A 373-amino-acid polypeptide reads, in one-letter code: Histidinol-phosphate aminotransferase (373 aa).

Lysine 229 is subject to N6-(pyridoxal phosphate)lysine.

It belongs to the class-II pyridoxal-phosphate-dependent aminotransferase family. Histidinol-phosphate aminotransferase subfamily. Pyridoxal 5'-phosphate is required as a cofactor.

The enzyme catalyses L-histidinol phosphate + 2-oxoglutarate = 3-(imidazol-4-yl)-2-oxopropyl phosphate + L-glutamate. It functions in the pathway amino-acid biosynthesis; L-histidine biosynthesis; L-histidine from 5-phospho-alpha-D-ribose 1-diphosphate: step 7/9. The polypeptide is Histidinol-phosphate aminotransferase (hisC) (Methanothermobacter thermautotrophicus (strain ATCC 29096 / DSM 1053 / JCM 10044 / NBRC 100330 / Delta H) (Methanobacterium thermoautotrophicum)).